We begin with the raw amino-acid sequence, 190 residues long: NADH-quinone oxidoreductase subunit B (190 aa).

[4Fe-4S] cluster contacts are provided by C39, C40, C104, and C135.

It belongs to the complex I 20 kDa subunit family. NDH-1 is composed of 14 different subunits. Subunits NuoB, C, D, E, F, and G constitute the peripheral sector of the complex. [4Fe-4S] cluster serves as cofactor.

It localises to the cell inner membrane. The catalysed reaction is a quinone + NADH + 5 H(+)(in) = a quinol + NAD(+) + 4 H(+)(out). NDH-1 shuttles electrons from NADH, via FMN and iron-sulfur (Fe-S) centers, to quinones in the respiratory chain. The immediate electron acceptor for the enzyme in this species is believed to be a menaquinone. Couples the redox reaction to proton translocation (for every two electrons transferred, four hydrogen ions are translocated across the cytoplasmic membrane), and thus conserves the redox energy in a proton gradient. The sequence is that of NADH-quinone oxidoreductase subunit B from Prosthecochloris aestuarii (strain DSM 271 / SK 413).